The primary structure comprises 1131 residues: PolyA-specific ribonuclease subunit panl-2 (1131 aa).

The 376-residue stretch at 489-864 (VTMQSTHGMN…LPALLAYKKK (376 aa)) folds into the USP domain. Residues 909–1074 (VGLDAEFIKI…VDARYALKLY (166 aa)) form the Exonuclease domain. Positions 1104 to 1115 (QTSSPLVVSTTR) are enriched in polar residues. A disordered region spans residues 1104 to 1131 (QTSSPLVVSTTRKTPEDTNPADAAPKSV).

The sequence is that of PolyA-specific ribonuclease subunit panl-2 from Caenorhabditis elegans.